The following is a 486-amino-acid chain: Probable glycine dehydrogenase (decarboxylating) subunit 2 (486 aa).

Lysine 269 is modified (N6-(pyridoxal phosphate)lysine).

This sequence belongs to the GcvP family. C-terminal subunit subfamily. In terms of assembly, the glycine cleavage system is composed of four proteins: P, T, L and H. In this organism, the P 'protein' is a heterodimer of two subunits. The cofactor is pyridoxal 5'-phosphate.

The enzyme catalyses N(6)-[(R)-lipoyl]-L-lysyl-[glycine-cleavage complex H protein] + glycine + H(+) = N(6)-[(R)-S(8)-aminomethyldihydrolipoyl]-L-lysyl-[glycine-cleavage complex H protein] + CO2. Functionally, the glycine cleavage system catalyzes the degradation of glycine. The P protein binds the alpha-amino group of glycine through its pyridoxal phosphate cofactor; CO(2) is released and the remaining methylamine moiety is then transferred to the lipoamide cofactor of the H protein. The sequence is that of Probable glycine dehydrogenase (decarboxylating) subunit 2 from Chlorobaculum tepidum (strain ATCC 49652 / DSM 12025 / NBRC 103806 / TLS) (Chlorobium tepidum).